The primary structure comprises 376 residues: Anhydro-N-acetylmuramic acid kinase (376 aa).

Residue Gly22–Asp29 participates in ATP binding.

Belongs to the anhydro-N-acetylmuramic acid kinase family.

The catalysed reaction is 1,6-anhydro-N-acetyl-beta-muramate + ATP + H2O = N-acetyl-D-muramate 6-phosphate + ADP + H(+). It participates in amino-sugar metabolism; 1,6-anhydro-N-acetylmuramate degradation. The protein operates within cell wall biogenesis; peptidoglycan recycling. Catalyzes the specific phosphorylation of 1,6-anhydro-N-acetylmuramic acid (anhMurNAc) with the simultaneous cleavage of the 1,6-anhydro ring, generating MurNAc-6-P. Is required for the utilization of anhMurNAc either imported from the medium or derived from its own cell wall murein, and thus plays a role in cell wall recycling. This is Anhydro-N-acetylmuramic acid kinase from Neisseria gonorrhoeae (strain NCCP11945).